Consider the following 161-residue polypeptide: Ribonuclease H (161 aa).

In terms of domain architecture, RNase H type-1 spans 2–141; the sequence is TNNEIIAATD…ADSLARQAAN (140 aa). Asp11, Glu46, Asp69, and Asp133 together coordinate Mg(2+).

This sequence belongs to the RNase H family. As to quaternary structure, monomer. Requires Mg(2+) as cofactor.

It localises to the cytoplasm. It carries out the reaction Endonucleolytic cleavage to 5'-phosphomonoester.. In terms of biological role, endonuclease that specifically degrades the RNA of RNA-DNA hybrids. This chain is Ribonuclease H, found in Tropheryma whipplei (strain TW08/27) (Whipple's bacillus).